The primary structure comprises 216 residues: Imidazoleglycerol-phosphate dehydratase (216 aa).

Phosphoserine is present on S211.

This sequence belongs to the imidazoleglycerol-phosphate dehydratase family.

The enzyme catalyses D-erythro-1-(imidazol-4-yl)glycerol 3-phosphate = 3-(imidazol-4-yl)-2-oxopropyl phosphate + H2O. It participates in amino-acid biosynthesis; L-histidine biosynthesis; L-histidine from 5-phospho-alpha-D-ribose 1-diphosphate: step 6/9. This is Imidazoleglycerol-phosphate dehydratase (his5) from Schizosaccharomyces pombe (strain 972 / ATCC 24843) (Fission yeast).